The chain runs to 1290 residues: Sorbin and SH3 domain-containing protein 1 (1290 aa).

3 disordered regions span residues 1–211 (MSSE…LSDV), 238–271 (HKLNRDDDSDVHSPRYSFSDDTKSPLSVPRSKSE), and 286–313 (TLPLPARSSSLKSSPERNDWEPLDKKVD). Residues 45–61 (SSSYRGTPSSSPVSPQE) are compositionally biased toward low complexity. The residue at position 51 (T51) is a Phosphothreonine. 3 positions are modified to phosphoserine: S55, S58, and S62. A compositionally biased stretch (basic and acidic residues) spans 62-71 (SPKHESKSGL). 2 stretches are compositionally biased toward polar residues: residues 83-95 (LSSSADTNGNAQP) and 123-153 (EVSSSHIETDSQDFPPTSRPSSAYPSTTIVN). Residues 161-173 (HNRDPASERRAGE) are compositionally biased toward basic and acidic residues. Phosphoserine is present on residues D164 and D175. Position 179 is a phosphothreonine (T179). A phosphoserine mark is found at S185, A194, S204, S209, S254, S261, S270, and P288. Basic and acidic residues predominate over residues 189–199 (ASERRAKDASR). The SoHo domain maps to 202–247 (VRSAQDLSDVSTDEVGIPLRNTERSKDWYKTMFKQIHKLNRDDDSD). Over residues 240 to 260 (LNRDDDSDVHSPRYSFSDDTK) the composition is skewed to basic and acidic residues. The segment covering 299 to 313 (SPERNDWEPLDKKVD) has biased composition (basic and acidic residues). Y325 carries the post-translational modification Phosphotyrosine; by ABL1. Residues S345, P346, Y357, S376, and S407 each carry the phosphoserine modification. Positions 389 to 416 (VETVNKSPSANSPQSSAVSPTPDITSEP) are disordered. Residues 392-412 (VNKSPSANSPQSSAVSPTPDI) show a composition bias toward polar residues. Y421 is subject to Phosphotyrosine; by ABL1. Phosphoserine is present on residues S432 and S470. Disordered regions lie at residues 463-482 (LSGLKRPSSSASTKVDRKGG), 588-607 (YDSKSSSTMSLQEYGTSSRR), 697-739 (SLDF…EMDG), 783-803 (VSNDSREGSGGSVHGDFPKHR), 822-841 (RKHEQQSSRQSDWRSDSRGD), and 862-972 (PLQQ…SPRH). Phosphothreonine is present on T475. 2 stretches are compositionally biased toward polar residues: residues 595–606 (TMSLQEYGTSSR) and 704–722 (LSKSPTPVLSRSGLTSARS). S969 carries the phosphoserine modification. SH3 domains are found at residues 1049–1108 (LEMR…LLPP) and 1123–1184 (LEYG…VLKR). The residue at position 1189 (T1189) is a Phosphothreonine. Y1193 and Y1198 each carry phosphotyrosine. The segment covering 1198 to 1210 (YSSSPSRSATVSP) has biased composition (low complexity). A disordered region spans residues 1198–1227 (YSSSPSRSATVSPQQPQAQQRRVTPDRSQP). Phosphoserine occurs at positions 1201 and 1209. Residues 1211–1227 (QQPQAQQRRVTPDRSQP) are compositionally biased toward polar residues. One can recognise an SH3 3 domain in the interval 1229–1290 (LDLCSYQALY…PGNYVKPLYL (62 aa)). Y1238 carries the post-translational modification Phosphotyrosine; by ABL1.

Interacts (via SH3 domain 2) with PXN. Interacts with the long isoform of AFDN and with VCL. AFDN and VCL bind to SORBS1 in a competitive manner and do not form a ternary complex. Interacts with ABL1, CBL, CBLB and INPPL1/SHIP2 through the third SH3 domain. Interaction with ABL1 occurs only after insulin stimulation while this has no effect on the interaction with INPPL1. Interacts with the insulin receptor but dissociates from it following insulin stimulation. Also interacts with SCA7, PTK2/FAK1 and flotillin. Interacts (via third SH3 domain) with the Ten-1 ICD form of TENM1; the interaction induces the translocation of SORBS1 to the nucleus. Interacts with INSM1. O-glycosylated. Expressed in all tissues tested: heart, brain, spleen, lung, liver, muscle, kidney and testis. Expressed in 3T3-L1 adipocytes but not in 3T3-L1 fibroblasts.

It is found in the cell junction. It localises to the adherens junction. Its subcellular location is the cell membrane. The protein resides in the cytoplasm. The protein localises to the cytoskeleton. It is found in the focal adhesion. It localises to the nucleus. Its subcellular location is the nucleus matrix. Plays a role in tyrosine phosphorylation of CBL by linking CBL to the insulin receptor. Required for insulin-stimulated glucose transport. Involved in formation of actin stress fibers and focal adhesions. The protein is Sorbin and SH3 domain-containing protein 1 of Mus musculus (Mouse).